The chain runs to 30 residues: V-type proton ATPase catalytic subunit A isoform 1 (30 aa).

This sequence belongs to the ATPase alpha/beta chains family. V-ATPase is a heteromultimeric enzyme composed of a peripheral catalytic V1 complex (main components: subunits A, B, C, D, E, and F) attached to an integral membrane V0 proton pore complex (main component: the proteolipid protein).

It carries out the reaction ATP + H2O + 4 H(+)(in) = ADP + phosphate + 5 H(+)(out). Catalytic subunit of the peripheral V1 complex of vacuolar ATPase. V-ATPase vacuolar ATPase is responsible for acidifying a variety of intracellular compartments in eukaryotic cells. The polypeptide is V-type proton ATPase catalytic subunit A isoform 1 (Psilotum nudum (Whisk fern)).